Here is a 252-residue protein sequence, read N- to C-terminus: Geranylgeranylglyceryl phosphate synthase (252 aa).

2 residues coordinate Mg(2+): aspartate 27 and serine 56. Sn-glycerol 1-phosphate-binding positions include 175–181, 206–207, and 228–229; these read YLEAGSG, GG, and GT.

This sequence belongs to the GGGP/HepGP synthase family. Group II subfamily. Requires Mg(2+) as cofactor.

It is found in the cytoplasm. The catalysed reaction is sn-glycerol 1-phosphate + (2E,6E,10E)-geranylgeranyl diphosphate = sn-3-O-(geranylgeranyl)glycerol 1-phosphate + diphosphate. Its pathway is membrane lipid metabolism; glycerophospholipid metabolism. Functionally, prenyltransferase that catalyzes the transfer of the geranylgeranyl moiety of geranylgeranyl diphosphate (GGPP) to the C3 hydroxyl of sn-glycerol-1-phosphate (G1P). This reaction is the first ether-bond-formation step in the biosynthesis of archaeal membrane lipids. The polypeptide is Geranylgeranylglyceryl phosphate synthase (Pyrococcus abyssi (strain GE5 / Orsay)).